Here is a 630-residue protein sequence, read N- to C-terminus: Succinate dehydrogenase [ubiquinone] flavoprotein subunit, mitochondrial (630 aa).

The transit peptide at 1–31 (MWRGCVSRGLRSLSKGKGSSSSAPVSAAARL) directs the protein to the mitochondrion. FAD contacts are provided by residues 52 to 57 (GAGGAG), 75 to 90 (TKLF…AQGG), and aspartate 260. Histidine 83 bears the Tele-8alpha-FAD histidine mark. 2 residues coordinate substrate: histidine 281 and threonine 293. Residue arginine 325 is the Proton acceptor of the active site. Histidine 392 is a substrate binding site. An FAD-binding site is contributed by glutamate 426. Residue arginine 437 participates in substrate binding. 442-443 (SL) lines the FAD pocket.

This sequence belongs to the FAD-dependent oxidoreductase 2 family. FRD/SDH subfamily. In terms of assembly, component of complex II composed of eight subunits in plants: four classical SDH subunits SDH1, SDH2, SDH3 and SDH4 (a flavoprotein (FP), an iron-sulfur protein (IP), and a cytochrome b composed of a large and a small subunit.), as well as four subunits unknown in mitochondria from bacteria and heterotrophic eukaryotes. Requires FAD as cofactor.

The protein resides in the mitochondrion inner membrane. It carries out the reaction a quinone + succinate = fumarate + a quinol. It participates in carbohydrate metabolism; tricarboxylic acid cycle; fumarate from succinate (eukaryal route): step 1/1. In terms of biological role, flavoprotein (FP) subunit of succinate dehydrogenase (SDH) that is involved in complex II of the mitochondrial electron transport chain and is responsible for transferring electrons from succinate to ubiquinone (coenzyme Q). The polypeptide is Succinate dehydrogenase [ubiquinone] flavoprotein subunit, mitochondrial (SDH1) (Oryza sativa subsp. japonica (Rice)).